Reading from the N-terminus, the 295-residue chain is Acetylglutamate kinase (295 aa).

Residues 61 to 62 (GG), R83, and N182 contribute to the substrate site.

It belongs to the acetylglutamate kinase family. ArgB subfamily.

It is found in the cytoplasm. It catalyses the reaction N-acetyl-L-glutamate + ATP = N-acetyl-L-glutamyl 5-phosphate + ADP. It functions in the pathway amino-acid biosynthesis; L-arginine biosynthesis; N(2)-acetyl-L-ornithine from L-glutamate: step 2/4. Its function is as follows. Catalyzes the ATP-dependent phosphorylation of N-acetyl-L-glutamate. This is Acetylglutamate kinase from Clostridium acetobutylicum (strain ATCC 824 / DSM 792 / JCM 1419 / IAM 19013 / LMG 5710 / NBRC 13948 / NRRL B-527 / VKM B-1787 / 2291 / W).